A 358-amino-acid polypeptide reads, in one-letter code: 3-dehydroquinate synthase (358 aa).

Residues 105–109, 129–130, Lys-142, Lys-151, and 169–172 contribute to the NAD(+) site; these read GVVGD, TT, and TLKT. Zn(2+) is bound by residues Glu-184, His-245, and His-262.

This sequence belongs to the sugar phosphate cyclases superfamily. Dehydroquinate synthase family. It depends on NAD(+) as a cofactor. Co(2+) serves as cofactor. Zn(2+) is required as a cofactor.

Its subcellular location is the cytoplasm. It catalyses the reaction 7-phospho-2-dehydro-3-deoxy-D-arabino-heptonate = 3-dehydroquinate + phosphate. The protein operates within metabolic intermediate biosynthesis; chorismate biosynthesis; chorismate from D-erythrose 4-phosphate and phosphoenolpyruvate: step 2/7. Its function is as follows. Catalyzes the conversion of 3-deoxy-D-arabino-heptulosonate 7-phosphate (DAHP) to dehydroquinate (DHQ). The polypeptide is 3-dehydroquinate synthase (Enterococcus faecalis (strain ATCC 47077 / OG1RF)).